A 290-amino-acid chain; its full sequence is Tubulin polyglutamylase complex subunit 1 (290 aa).

Residues 1-30 (MAAVEKRRQAVPPPAGFTDSGRQSVSRAAG) form a disordered region. Phosphoserine is present on residues Ser34 and Ser266.

Part of the neuronal tubulin polyglutamylase complex which contains TPGS1, TPGS2, TTLL1, LRRC49 and NICN1. Interacts with PCM1, CSTPP1 and LRRC49.

The protein localises to the cytoplasm. Its subcellular location is the cytoskeleton. The protein resides in the cilium axoneme. It localises to the flagellum axoneme. It is found in the cilium basal body. The protein localises to the flagellum basal body. Its subcellular location is the cell projection. The protein resides in the axon. It localises to the dendrite. It is found in the microtubule organizing center. The protein localises to the centrosome. Its subcellular location is the centriolar satellite. Functionally, subunit of the tubulin polyglutamylase complex (TPGC). The complex mediates cilia and flagella polyglutamylation which is essential for their biogenesis and motility. May act in the targeting of the tubulin polyglutamylase complex. Required for the development of the spermatid flagellum. The chain is Tubulin polyglutamylase complex subunit 1 from Homo sapiens (Human).